A 254-amino-acid chain; its full sequence is Isoprenyl transferase (254 aa).

The active site involves Asp-34. Asp-34 is a Mg(2+) binding site. Substrate-binding positions include Gly-35–Arg-38, Trp-39, Arg-47, His-51, and Ser-79–Glu-81. Asn-82 serves as the catalytic Proton acceptor. Substrate-binding positions include Trp-83, Arg-85, Arg-202, and Arg-208 to Ser-210. Residue Glu-221 coordinates Mg(2+).

The protein belongs to the UPP synthase family. As to quaternary structure, homodimer. Mg(2+) is required as a cofactor.

In terms of biological role, catalyzes the condensation of isopentenyl diphosphate (IPP) with allylic pyrophosphates generating different type of terpenoids. This Staphylococcus saprophyticus subsp. saprophyticus (strain ATCC 15305 / DSM 20229 / NCIMB 8711 / NCTC 7292 / S-41) protein is Isoprenyl transferase.